Consider the following 279-residue polypeptide: Putative pyruvate, phosphate dikinase regulatory protein (279 aa).

Residue 153-160 (GVSRTSKT) coordinates ADP.

It belongs to the pyruvate, phosphate/water dikinase regulatory protein family. PDRP subfamily.

The catalysed reaction is N(tele)-phospho-L-histidyl/L-threonyl-[pyruvate, phosphate dikinase] + ADP = N(tele)-phospho-L-histidyl/O-phospho-L-threonyl-[pyruvate, phosphate dikinase] + AMP + H(+). It carries out the reaction N(tele)-phospho-L-histidyl/O-phospho-L-threonyl-[pyruvate, phosphate dikinase] + phosphate + H(+) = N(tele)-phospho-L-histidyl/L-threonyl-[pyruvate, phosphate dikinase] + diphosphate. Functionally, bifunctional serine/threonine kinase and phosphorylase involved in the regulation of the pyruvate, phosphate dikinase (PPDK) by catalyzing its phosphorylation/dephosphorylation. This Rhodopseudomonas palustris (strain BisB5) protein is Putative pyruvate, phosphate dikinase regulatory protein.